Reading from the N-terminus, the 123-residue chain is Large ribosomal subunit protein uL29 (123 aa).

It belongs to the universal ribosomal protein uL29 family. As to quaternary structure, component of the large ribosomal subunit.

Its subcellular location is the cytoplasm. Component of the large ribosomal subunit. The ribosome is a large ribonucleoprotein complex responsible for the synthesis of proteins in the cell. The polypeptide is Large ribosomal subunit protein uL29 (rpl35) (Platichthys flesus (European flounder)).